A 157-amino-acid polypeptide reads, in one-letter code: Transcriptional repressor NrdR (157 aa).

A zinc finger spans residues 3–34 (CPFCGHEDTQVKDSRPTDDGTAIRRRRSCTAC). In terms of domain architecture, ATP-cone spans 49–139 (LIVVKTDQRR…VYRNFSDAGD (91 aa)).

The protein belongs to the NrdR family. The cofactor is Zn(2+).

Functionally, negatively regulates transcription of bacterial ribonucleotide reductase nrd genes and operons by binding to NrdR-boxes. The polypeptide is Transcriptional repressor NrdR (Granulibacter bethesdensis (strain ATCC BAA-1260 / CGDNIH1)).